Here is a 1040-residue protein sequence, read N- to C-terminus: Multidrug resistance protein MdtB (1040 aa).

A run of 11 helical transmembrane segments spans residues 15–37 (LFIL…GIIG), 345–362 (FELM…YLFL), 367–389 (ATII…MVFL), 396–418 (LTLM…VIEN), 438–460 (GEIG…PLLF), 472–494 (FAVT…TPMM), 535–557 (HPWL…WIVI), 867–889 (VWLI…ESFI), 909–931 (LIIA…IGIV), 968–990 (ILMT…GVGT), and 1000–1022 (MVGG…YLLF).

Belongs to the resistance-nodulation-cell division (RND) (TC 2.A.6) family. MdtB subfamily. As to quaternary structure, part of a tripartite efflux system composed of MdtA, MdtB and MdtC. MdtB forms a heteromultimer with MdtC.

The protein resides in the cell inner membrane. This is Multidrug resistance protein MdtB from Salmonella typhimurium (strain LT2 / SGSC1412 / ATCC 700720).